Here is a 685-residue protein sequence, read N- to C-terminus: Putative pentatricopeptide repeat-containing protein At3g08820 (685 aa).

PPR repeat units follow at residues 75-109 (NIFL…GLYL), 110-144 (HGFT…GFNH), 145-175 (DVAA…IPDR), 176-210 (SVVT…GVKP), 211-245 (DSYF…EMQK), 246-276 (NSFV…MVEK), 277-311 (DIVT…NLKP), 312-346 (DQFS…EFLT), 347-381 (NLFM…DIVI), 383-412 (NAAI…GISP), 413-443 (DGST…ISCV), and 449-479 (TVEH…MPMR). Positions 484-559 (VWGALLSGCR…IPGYSWIELE (76 aa)) are type E motif. A type E(+) motif region spans residues 560–590 (GKVHEFLADDKSHPLSDKIYAKLEDLGNEMR). Residues 591–685 (LMGFVPTTEF…NGSCSCNDYW (95 aa)) form a type DYW motif region.

The protein belongs to the PPR family. PCMP-H subfamily.

The sequence is that of Putative pentatricopeptide repeat-containing protein At3g08820 (PCMP-H84) from Arabidopsis thaliana (Mouse-ear cress).